Here is a 425-residue protein sequence, read N- to C-terminus: ATP-dependent RNA helicase RhlB (425 aa).

The Q motif signature appears at 9-37 (TRFADLALHPKIQQAISSAGFEYCTPIQA). The Helicase ATP-binding domain maps to 40–218 (LPVALSNRDV…YEHMNAPTKL (179 aa)). 53–60 (AQTGTGKT) contacts ATP. The short motif at 164-167 (DEAD) is the DEAD box element. Positions 242–389 (KFPLLLTLIE…VTKYDGDALL (148 aa)) constitute a Helicase C-terminal domain. Positions 391-425 (DLRRPRPIQRRRRHNSGGGKGKPRGRRSGPPRNAS) are disordered. Residues 395 to 419 (PRPIQRRRRHNSGGGKGKPRGRRSG) show a composition bias toward basic residues.

Belongs to the DEAD box helicase family. RhlB subfamily. In terms of assembly, component of the RNA degradosome, which is a multiprotein complex involved in RNA processing and mRNA degradation.

It localises to the cytoplasm. It catalyses the reaction ATP + H2O = ADP + phosphate + H(+). Its function is as follows. DEAD-box RNA helicase involved in RNA degradation. Has RNA-dependent ATPase activity and unwinds double-stranded RNA. The protein is ATP-dependent RNA helicase RhlB of Idiomarina loihiensis (strain ATCC BAA-735 / DSM 15497 / L2-TR).